We begin with the raw amino-acid sequence, 515 residues long: E3 ubiquitin-protein ligase RNF217 (515 aa).

Disordered regions lie at residues 1-125 and 147-189; these read MGEE…VLAQ and PEAP…ADPL. A compositionally biased stretch (gly residues) spans 10-22; sequence GSGGARASGGGSA. Low complexity-rich tracts occupy residues 39-49 and 147-157; these read GPRAAASSSRP and PEAPSAESPSP. Positions 158–178 are enriched in pro residues; that stretch reads SESPPQAPLGPIPASPPPSFP. The segment covering 179–189 has biased composition (low complexity); sequence SSPLSLPADPL. Positions 232–451 are TRIAD supradomain; it reads MVLMCRVCLE…LSIFGCKYRY (220 aa). Zn(2+)-binding residues include C236, C239, C256, C259, C356, C359, H364, C369, C396, and C399. The RING-type 1 zinc-finger motif lies at 236–282; it reads CRVCLEDKPIKPLPCCKKAVCEECLKIYLSSQVQLGQVEIKCPVTEC. The segment at 301-369 adopts an IBR-type zinc-finger fold; the sequence is IKYKYFLELG…HSPWHEGVNC (69 aa). Residues 396 to 425 form an RING-type 2; atypical zinc finger; it reads CPKCKIHIQRTEGCDHMTCSQCNTNFCYRC. C409 is an active-site residue. C414, C417, C422, C425, H438, and C447 together coordinate Zn(2+). A helical transmembrane segment spans residues 476–496; the sequence is LILVLGLALGAIAVVIGLFVF.

The protein belongs to the RBR family. RNF217 subfamily. In terms of assembly, interacts with HAX1.

Its subcellular location is the membrane. It localises to the cytoplasm. It carries out the reaction [E2 ubiquitin-conjugating enzyme]-S-ubiquitinyl-L-cysteine + [acceptor protein]-L-lysine = [E2 ubiquitin-conjugating enzyme]-L-cysteine + [acceptor protein]-N(6)-ubiquitinyl-L-lysine.. The protein operates within protein modification; protein ubiquitination. Functionally, E3 ubiquitin-protein ligase which accepts ubiquitin from E2 ubiquitin-conjugating enzymes in the form of a thioester and then directly transfers the ubiquitin to targeted substrates. Mediates the degradation of the iron exporter ferroportin/SLC40A1 and thus regulates iron homeostasis. The sequence is that of E3 ubiquitin-protein ligase RNF217 (Rnf217) from Mus musculus (Mouse).